Here is a 315-residue protein sequence, read N- to C-terminus: Cytochrome c biogenesis protein CcsA (315 aa).

7 helical membrane passes run 14 to 34 (VVSL…ISFW), 72 to 92 (ISNL…AQLF), 101 to 121 (IVSA…SFVL), 146 to 166 (VIMC…GVFL), 221 to 241 (SITA…VWAN), 255 to 272 (TWAL…HTRL), and 282 to 302 (AILA…VNLL).

It belongs to the CcmF/CycK/Ccl1/NrfE/CcsA family. May interact with ccs1.

The protein localises to the cellular thylakoid membrane. Its function is as follows. Required during biogenesis of c-type cytochromes (cytochrome c6 and cytochrome f) at the step of heme attachment. This chain is Cytochrome c biogenesis protein CcsA, found in Prochlorococcus marinus (strain NATL1A).